Reading from the N-terminus, the 567-residue chain is Urease subunit alpha (567 aa).

A Urease domain is found at 129–567 (GGIDSHIHFI…LPMAQRYFLF (439 aa)). Ni(2+)-binding residues include histidine 134, histidine 136, and lysine 217. At lysine 217 the chain carries N6-carboxylysine. Substrate is bound at residue histidine 219. 2 residues coordinate Ni(2+): histidine 246 and histidine 272. The active-site Proton donor is histidine 320. Position 360 (aspartate 360) interacts with Ni(2+).

The protein belongs to the metallo-dependent hydrolases superfamily. Urease alpha subunit family. As to quaternary structure, heterotrimer of UreA (gamma), UreB (beta) and UreC (alpha) subunits. Three heterotrimers associate to form the active enzyme. Ni cation is required as a cofactor. In terms of processing, carboxylation allows a single lysine to coordinate two nickel ions.

Its subcellular location is the cytoplasm. The enzyme catalyses urea + 2 H2O + H(+) = hydrogencarbonate + 2 NH4(+). The protein operates within nitrogen metabolism; urea degradation; CO(2) and NH(3) from urea (urease route): step 1/1. This is Urease subunit alpha from Alcanivorax borkumensis (strain ATCC 700651 / DSM 11573 / NCIMB 13689 / SK2).